A 737-amino-acid chain; its full sequence is Zinc finger protein 585A (737 aa).

The KRAB domain occupies 1-65 (MAAPTREEWR…QGERPRQSCP (65 aa)). 6 consecutive C2H2-type zinc fingers follow at residues 126–148 (YVCIECGKAFVQKPEFIIHQKTH), 154–176 (FKCNECGKSFFQVSSLFRHQRIH), 182–204 (YECSQCGKGFSYNSDLSIHEKIH), 210–232 (HECTDCGKAFTQKSTLKMHQKIH), 238–260 (YICIECGQAFIQKTHLIAHRRIH), and 266–288 (YECSNCGKSFISKSQLQVHQRVH). The segment at 294-316 (YICTEYGKVFSNNSNLITHKKVQ) adopts a C2H2-type 7; degenerate zinc-finger fold. C2H2-type zinc fingers lie at residues 322–344 (SICTECGKAFTYRSELIIHQRIH), 350–372 (YACSDCGKAFTQKSALTVHQRIH), 378–400 (YICMKCGLAFIQKAHLIAHQIIH), 406–428 (YKCGHCGKLFTSKSQLHVHKRIH), 434–456 (YMCNKCGKAFTNRSNLITHQKTH), 462–484 (YICSKCGKAFTQRSDLITHQRIH), 490–512 (YECSTCGKAFTQKSHLNIHQKIH), 518–540 (YECHECGKAFNQKSILIVHQKIH), 546–568 (YVCTECGRAFIRKSNFITHQRIH), 574–596 (YECSDCGKSFTSKSQLLVHQPLH), 602–624 (YVCAECGKAFSGRSNLSKHQKTH), 630–652 (YICSECGKTFRQKSELITHHRIH), 658–680 (YECSDCGKSFTKKSQLQVHQRIH), 686–708 (YVCAECGKAFTDRSNLNKHQTTH), and 714–736 (YKCGICGKGFVQKSVFSVHQSNH).

The protein belongs to the krueppel C2H2-type zinc-finger protein family.

The protein localises to the nucleus. In terms of biological role, may be involved in transcriptional regulation. This Pongo abelii (Sumatran orangutan) protein is Zinc finger protein 585A (ZNF585A).